A 392-amino-acid chain; its full sequence is Phospho-N-acetylmuramoyl-pentapeptide-transferase (392 aa).

Helical transmembrane passes span 29 to 49, 76 to 96, 100 to 120, 137 to 157, 193 to 213, 225 to 245, 262 to 282, 289 to 309, 314 to 334, and 369 to 389; these read AVMAALTALLIGLLAGPFVIR, TMGGVLILMSIGISTLLWFDL, FVWIVLLVTLGFGAIGWADDW, YLWQSLIGLVAALYLVFSISE, ISYPLGVFGFVILTYLVIVGS, GLAIMPVVMVGSALGVFAYVT, SGELLIFCSAMAGAGLAFLWF, VFMGDVGALALGAALGTIAVI, IVLAIMGGIFVVEALSVMMQV, and QVVVRFWIITMLLCLVGLSTL.

The protein belongs to the glycosyltransferase 4 family. MraY subfamily. Mg(2+) serves as cofactor.

The protein resides in the cell inner membrane. The catalysed reaction is UDP-N-acetyl-alpha-D-muramoyl-L-alanyl-gamma-D-glutamyl-meso-2,6-diaminopimeloyl-D-alanyl-D-alanine + di-trans,octa-cis-undecaprenyl phosphate = di-trans,octa-cis-undecaprenyl diphospho-N-acetyl-alpha-D-muramoyl-L-alanyl-D-glutamyl-meso-2,6-diaminopimeloyl-D-alanyl-D-alanine + UMP. It functions in the pathway cell wall biogenesis; peptidoglycan biosynthesis. In terms of biological role, catalyzes the initial step of the lipid cycle reactions in the biosynthesis of the cell wall peptidoglycan: transfers peptidoglycan precursor phospho-MurNAc-pentapeptide from UDP-MurNAc-pentapeptide onto the lipid carrier undecaprenyl phosphate, yielding undecaprenyl-pyrophosphoryl-MurNAc-pentapeptide, known as lipid I. The polypeptide is Phospho-N-acetylmuramoyl-pentapeptide-transferase (Polaromonas sp. (strain JS666 / ATCC BAA-500)).